A 615-amino-acid chain; its full sequence is MLNRFIAFFRSVFLIGLVATAFGALPARAANETAPDYALSMHGDVALPADYTHFPYTNPDAPKKGSLTVGVVGTFDSLNPFVLKSMRTTARGLYNDGEFGNMVYQTLMLRSRDEPFTLYSLLAEKVAIDPERKWVEFTLNPKAKWSDGQPVTVDDVLFTYDILTEKGRPPYNSRMSRVAKIEKTGERSVRFTFNEKSDREFPMLIAGSMPVLPKHAINRDTFGNSTLEPPIGSGPYVVASVQPGQRIVYKRNPDYWGKDLPSQRGFNNFDKISIEYYRNETSLFESFKKGILDIFIEGNPIRWEKLYDFPAVEQGKVIKDTFEKGTPADMLGFVFNTRRPIFADRRVRQALGLLFDFEWANRNLFAGQYRRTQSFWEGSQLSSVGRPADARERELLAAFPGAVREDVMNGTWHPPVTDGSGHDRVPAKKAYDLLSQAGFQFKDGMAIDPTGKPFAFEIMTRSPDEEKIALAYQRNLSRLGIAVEIHTVDDAQYQQRLQTFDYDMILGALASSLSPGNEQWLRWGSASRDVQGSFNFAGVADPAVDAMIEALLAARNRADFVSAVRALDRVLISGDYYVPLYHLPYQWVARWDRIEHPQKTPLSGYQLPTWWHTSQ.

The first 29 residues, 1 to 29 (MLNRFIAFFRSVFLIGLVATAFGALPARA), serve as a signal peptide directing secretion.

The protein belongs to the bacterial solute-binding protein 5 family.

It is found in the periplasm. In Brucella suis biovar 1 (strain 1330), this protein is Putative binding protein BRA0576/BS1330_II0571.